The chain runs to 484 residues: Glutamyl-tRNA(Gln) amidotransferase subunit A (484 aa).

Catalysis depends on charge relay system residues lysine 74 and serine 149. The active-site Acyl-ester intermediate is the serine 173.

The protein belongs to the amidase family. GatA subfamily. As to quaternary structure, heterotrimer of A, B and C subunits.

It carries out the reaction L-glutamyl-tRNA(Gln) + L-glutamine + ATP + H2O = L-glutaminyl-tRNA(Gln) + L-glutamate + ADP + phosphate + H(+). Functionally, allows the formation of correctly charged Gln-tRNA(Gln) through the transamidation of misacylated Glu-tRNA(Gln) in organisms which lack glutaminyl-tRNA synthetase. The reaction takes place in the presence of glutamine and ATP through an activated gamma-phospho-Glu-tRNA(Gln). The sequence is that of Glutamyl-tRNA(Gln) amidotransferase subunit A from Prochlorococcus marinus subsp. pastoris (strain CCMP1986 / NIES-2087 / MED4).